Reading from the N-terminus, the 97-residue chain is Transcription and mRNA export factor SUS1 (97 aa).

The protein belongs to the ENY2 family. In terms of assembly, component of the nuclear pore complex (NPC)-associated TREX-2 complex (transcription and export complex 2), composed of at least SUS1, SAC3, THP1, SEM1, and CDC31. TREX-2 contains 2 SUS1 chains. The TREX-2 complex interacts with the nucleoporin NUP1. Component of the 1.8 MDa SAGA transcription coactivator-HAT complex. SAGA is built of 5 distinct domains with specialized functions. Within the SAGA complex, SUS1, SGF11, SGF73 and UBP8 form an additional subcomplex of SAGA called the DUB module (deubiquitination module). Interacts directly with THP1, SAC3, SGF11, and with the RNA polymerase II.

It localises to the nucleus. The protein localises to the nucleoplasm. The protein resides in the cytoplasm. It is found in the P-body. In terms of biological role, involved in mRNA export coupled transcription activation by association with both the TREX-2 and the SAGA complexes. At the promoters, SAGA is required for recruitment of the basal transcription machinery. It influences RNA polymerase II transcriptional activity through different activities such as TBP interaction and promoter selectivity, interaction with transcription activators, and chromatin modification through histone acetylation and deubiquitination. Within the SAGA complex, participates in a subcomplex required for deubiquitination of H2B and for the maintenance of steady-state H3 methylation levels. The TREX-2 complex functions in docking export-competent ribonucleoprotein particles (mRNPs) to the nuclear entrance of the nuclear pore complex (nuclear basket). TREX-2 participates in mRNA export and accurate chromatin positioning in the nucleus by tethering genes to the nuclear periphery. May also be involved in cytoplasmic mRNA decay by interaction with components of P-bodies. The chain is Transcription and mRNA export factor SUS1 from Meyerozyma guilliermondii (strain ATCC 6260 / CBS 566 / DSM 6381 / JCM 1539 / NBRC 10279 / NRRL Y-324) (Yeast).